The sequence spans 207 residues: Holliday junction branch migration complex subunit RuvA (207 aa).

Residues 1-64 (MISYIKGELA…EDECSLFGFL (64 aa)) are domain I. The interval 65 to 143 (TRDDLSMFKM…LDEVFESALS (79 aa)) is domain II. The interval 144–155 (KNKKADNNSNVS) is flexible linker. A domain III region spans residues 156–207 (NVMMIRNDAVEALVSLGYSSKDALVAVKEVEDIENKDSETVLKEALKKLVKF).

This sequence belongs to the RuvA family. In terms of assembly, homotetramer. Forms an RuvA(8)-RuvB(12)-Holliday junction (HJ) complex. HJ DNA is sandwiched between 2 RuvA tetramers; dsDNA enters through RuvA and exits via RuvB. An RuvB hexamer assembles on each DNA strand where it exits the tetramer. Each RuvB hexamer is contacted by two RuvA subunits (via domain III) on 2 adjacent RuvB subunits; this complex drives branch migration. In the full resolvosome a probable DNA-RuvA(4)-RuvB(12)-RuvC(2) complex forms which resolves the HJ.

The protein resides in the cytoplasm. In terms of biological role, the RuvA-RuvB-RuvC complex processes Holliday junction (HJ) DNA during genetic recombination and DNA repair, while the RuvA-RuvB complex plays an important role in the rescue of blocked DNA replication forks via replication fork reversal (RFR). RuvA specifically binds to HJ cruciform DNA, conferring on it an open structure. The RuvB hexamer acts as an ATP-dependent pump, pulling dsDNA into and through the RuvAB complex. HJ branch migration allows RuvC to scan DNA until it finds its consensus sequence, where it cleaves and resolves the cruciform DNA. The polypeptide is Holliday junction branch migration complex subunit RuvA (Lachnospira eligens (strain ATCC 27750 / DSM 3376 / VPI C15-48 / C15-B4) (Eubacterium eligens)).